Consider the following 516-residue polypeptide: Putative GTP-binding protein 6 (516 aa).

Low complexity predominate over residues 18–39 (GRGRSAPRAAAPSCPARALAAV). A disordered region spans residues 18-82 (GRGRSAPRAA…PEDADENAEE (65 aa)). Residues 57 to 67 (LRADGGRSRTG) are compositionally biased toward basic and acidic residues. Residues 68–82 (DDEEEPEDADENAEE) show a composition bias toward acidic residues. Residues 295-459 (PVISVVGYTN…ELDAAVLKAT (165 aa)) form the Hflx-type G domain. GTP-binding positions include 301 to 308 (GYTNCGKT), 327 to 331 (FATLD), 349 to 352 (DTIG), 418 to 421 (NKVD), and 437 to 439 (SAL). Residues Thr308 and Thr329 each contribute to the Mg(2+) site.

The protein belongs to the TRAFAC class OBG-HflX-like GTPase superfamily. HflX GTPase family. It depends on Mg(2+) as a cofactor. As to expression, ubiquitously expressed.

In Homo sapiens (Human), this protein is Putative GTP-binding protein 6 (GTPBP6).